Reading from the N-terminus, the 249-residue chain is Probable phosphatase Spea_1436 (249 aa).

Residues histidine 8, histidine 10, histidine 16, histidine 41, glutamate 74, histidine 102, histidine 132, aspartate 193, and histidine 195 each coordinate Zn(2+).

The protein belongs to the PHP family. The cofactor is Zn(2+).

The sequence is that of Probable phosphatase Spea_1436 from Shewanella pealeana (strain ATCC 700345 / ANG-SQ1).